The chain runs to 1483 residues: Chromosome partition protein MukB (1483 aa).

An ATP-binding site is contributed by 34–41 (GGNGAGKS). 2 coiled-coil regions span residues 311 to 426 (EMAR…LQRA) and 547 to 607 (GQQV…WLAA). Positions 666–783 (PGGSEDARLN…KVPLFGRAAR (118 aa)) are flexible hinge. Coiled coils occupy residues 835–1115 (EAAL…SAKA) and 1206–1266 (DDPV…QAVS). A disordered region spans residues 850–870 (RELNNHESENQQQRQQYEQAK).

Belongs to the SMC family. MukB subfamily. Homodimerization via its hinge domain. Binds to DNA via its C-terminal region. Interacts, and probably forms a ternary complex, with MukE and MukF via its C-terminal region. The complex formation is stimulated by calcium or magnesium. Interacts with tubulin-related protein FtsZ.

It is found in the cytoplasm. The protein resides in the nucleoid. Functionally, plays a central role in chromosome condensation, segregation and cell cycle progression. Functions as a homodimer, which is essential for chromosome partition. Involved in negative DNA supercoiling in vivo, and by this means organize and compact chromosomes. May achieve or facilitate chromosome segregation by condensation DNA from both sides of a centrally located replisome during cell division. This chain is Chromosome partition protein MukB, found in Erwinia tasmaniensis (strain DSM 17950 / CFBP 7177 / CIP 109463 / NCPPB 4357 / Et1/99).